Reading from the N-terminus, the 352-residue chain is MKMTFRWYGDTDPVPLAYIRQIPGMVGVVSAIYDVPVGEVWPIDRIRSLKEKIEAHGLTLEVIESVPVHEDIKLGKPTRDTLIVNYGQTLRNLGACGVKVVCYNFMPVFDWTRTSLEMPLPDGSTTLAFDTQAIRELDVSEGIQLPGWDASYRPEQLKALLRDYEALDEAGLWANLDYFLRAIIPVAKEAGIKMAIHPDDPPRPIFGLPRIVKNRADLQRVLDIVDDPANGLTLCSGSLGADLQNDIPALVREFGARGRIHFAHLRNVQTNAAGDFHETSHRSADGSLDMAEIVKAYFETGFEGYARPDHGRMIWGETGRAGYGLFDRALGAVYLNGIWEGLAKHPADHAAE.

Belongs to the mannonate dehydratase family. Requires Fe(2+) as cofactor. It depends on Mn(2+) as a cofactor.

The catalysed reaction is D-mannonate = 2-dehydro-3-deoxy-D-gluconate + H2O. Its pathway is carbohydrate metabolism; pentose and glucuronate interconversion. Catalyzes the dehydration of D-mannonate. The sequence is that of Mannonate dehydratase from Paraburkholderia phytofirmans (strain DSM 17436 / LMG 22146 / PsJN) (Burkholderia phytofirmans).